The primary structure comprises 166 residues: Sec-independent protein translocase protein TatB (166 aa).

The chain crosses the membrane as a helical span at residues 2 to 22 (FDGIGFMELLLIGVLGLVVLG). Residues 69 to 166 (SKGLSNLSPE…DTRSNPKANG (98 aa)) are disordered. Composition is skewed to polar residues over residues 88–97 (QAAQSVNRPY) and 112–132 (QIYSPVASTVQTSPAQASQAN). The segment covering 133 to 153 (PTATVEASPAPASPATPSEPS) has biased composition (low complexity). A compositionally biased stretch (polar residues) spans 155–166 (GADTRSNPKANG).

The protein belongs to the TatB family. The Tat system comprises two distinct complexes: a TatABC complex, containing multiple copies of TatA, TatB and TatC subunits, and a separate TatA complex, containing only TatA subunits. Substrates initially bind to the TatABC complex, which probably triggers association of the separate TatA complex to form the active translocon.

It localises to the cell inner membrane. Its function is as follows. Part of the twin-arginine translocation (Tat) system that transports large folded proteins containing a characteristic twin-arginine motif in their signal peptide across membranes. Together with TatC, TatB is part of a receptor directly interacting with Tat signal peptides. TatB may form an oligomeric binding site that transiently accommodates folded Tat precursor proteins before their translocation. This is Sec-independent protein translocase protein TatB from Shewanella baltica (strain OS155 / ATCC BAA-1091).